Consider the following 499-residue polypeptide: Probable dipeptidase B (499 aa).

Residue cysteine 26 is part of the active site.

Belongs to the peptidase C69 family.

The catalysed reaction is an L-aminoacyl-L-amino acid + H2O = 2 an L-alpha-amino acid. This Streptococcus pyogenes serotype M6 (strain ATCC BAA-946 / MGAS10394) protein is Probable dipeptidase B (pepDB).